Consider the following 255-residue polypeptide: Protein C activator (255 aa).

Positions 1-18 (MVLIRVLANLLILHLSYA) are cleaved as a signal peptide. The propeptide occupies 19-24 (QKSSEL). The Peptidase S1 domain maps to 25–246 (VIGGDECNIN…YTDWIQSIIS (222 aa)). Intrachain disulfides connect Cys31-Cys162, Cys49-Cys65, Cys97-Cys253, Cys141-Cys207, Cys173-Cys186, and Cys197-Cys222. Asn45 carries an N-linked (GlcNAc...) asparagine glycan. His64 serves as the catalytic Charge relay system. The N-linked (GlcNAc...) asparagine glycan is linked to Asn102. The active-site Charge relay system is the Asp109. Asn153 is a glycosylation site (N-linked (GlcNAc...) asparagine). Residue Ser201 is the Charge relay system of the active site.

It belongs to the peptidase S1 family. Snake venom subfamily. In terms of assembly, monomer. In terms of tissue distribution, expressed by the venom gland.

It is found in the secreted. Snake venom serine protease that selectively cleaves the heavy chain of protein C (PROC). This activation is thrombomodulin-independent. The protein is Protein C activator of Agkistrodon piscivorus leucostoma (Western cottonmouth).